A 61-amino-acid polypeptide reads, in one-letter code: Japonicin-1CDYa (61 aa).

The N-terminal stretch at 1–22 (MFTLKKSLLLLFFLGVINVSLC) is a signal peptide. Positions 23–45 (EEERDADEEERRDDPEERDVEVE) are excised as a propeptide. Cys-55 and Cys-61 are oxidised to a cystine.

It belongs to the frog skin active peptide (FSAP) family. Brevinin subfamily. As to expression, expressed by the skin glands.

It localises to the secreted. Functionally, antimicrobial peptide. Has low activity against the Gram-positive bacterium S.aureus (MIC&gt;100 uM) and the Gram-negative bacterium E.coli (MIC=25 uM). Lacks hemolytic activity against human erythrocytes. The chain is Japonicin-1CDYa from Rana dybowskii (Dybovsky's frog).